The chain runs to 193 residues: Imidazoleglycerol-phosphate dehydratase (193 aa).

Belongs to the imidazoleglycerol-phosphate dehydratase family.

Its subcellular location is the cytoplasm. It carries out the reaction D-erythro-1-(imidazol-4-yl)glycerol 3-phosphate = 3-(imidazol-4-yl)-2-oxopropyl phosphate + H2O. The protein operates within amino-acid biosynthesis; L-histidine biosynthesis; L-histidine from 5-phospho-alpha-D-ribose 1-diphosphate: step 6/9. The sequence is that of Imidazoleglycerol-phosphate dehydratase from Saccharolobus islandicus (strain Y.N.15.51 / Yellowstone #2) (Sulfolobus islandicus).